A 71-amino-acid polypeptide reads, in one-letter code: uncharacterized protein (71 aa).

This is an uncharacterized protein from Bacillus subtilis (strain 168).